The sequence spans 203 residues: Small ribosomal subunit protein uS5 (203 aa).

Over residues 1 to 18 (MENNVKKETIVDSEKVEK) the composition is skewed to basic and acidic residues. The disordered stretch occupies residues 1 to 36 (MENNVKKETIVDSEKVEKQQPVTAPVVNKKENTQPK). Residues 49 to 112 (FEERVVKIKR…KNANNNLIKV (64 aa)) enclose the S5 DRBM domain.

It belongs to the universal ribosomal protein uS5 family. Part of the 30S ribosomal subunit. Contacts proteins S4 and S8.

With S4 and S12 plays an important role in translational accuracy. Its function is as follows. Located at the back of the 30S subunit body where it stabilizes the conformation of the head with respect to the body. The chain is Small ribosomal subunit protein uS5 from Ureaplasma urealyticum serovar 10 (strain ATCC 33699 / Western).